The chain runs to 258 residues: UPF0246 protein IL2146 (258 aa).

The protein belongs to the UPF0246 family.

The polypeptide is UPF0246 protein IL2146 (Idiomarina loihiensis (strain ATCC BAA-735 / DSM 15497 / L2-TR)).